The sequence spans 718 residues: Ubiquitin homeostasis protein lub1 (718 aa).

7 WD repeats span residues 12 to 50, 54 to 98, 101 to 139, 140 to 178, 180 to 217, 218 to 257, and 259 to 296; these read GHKQ…WTPH, NHEG…PSYY, GHES…YVLK, GHQS…KSIL, HNDC…YELH, GHTS…QCIT, and PTTS…VAPT. The PFU domain occupies 353 to 448; the sequence is QWSQKENEWK…QGHSLESKKE (96 aa). Residues 462–717 form the PUL domain; it reads TIFPVSQLLF…VDAEKQILSL (256 aa).

As to quaternary structure, interacts with cdc48.

It is found in the nucleus. Its subcellular location is the cytoplasm. Functionally, acts as a negative regulator of vacuole-dependent ubiquitin degradation. The protein is Ubiquitin homeostasis protein lub1 (lub1) of Schizosaccharomyces pombe (strain 972 / ATCC 24843) (Fission yeast).